A 475-amino-acid polypeptide reads, in one-letter code: Cytochrome P450 monooxygenase opdE (475 aa).

A helical transmembrane segment spans residues 10 to 32; the sequence is VQNIPVLLLSCGFLAILFRSLVL. Residue C457 participates in heme binding.

This sequence belongs to the cytochrome P450 family. Heme is required as a cofactor.

It is found in the membrane. It participates in secondary metabolite biosynthesis. In terms of biological role, cytochrome P450 monooxygenase; part of the gene cluster that mediates the biosynthesis of oxopyrrolidines, polyketide-amino acid hybrid compounds with feature structures of tetramic acid. Does not seem to play a role in oxopyrrolidines A and B biosynthesis. May be involved in further modifications of these oxopyrrolidines. This Penicillium oxalicum (strain 114-2 / CGMCC 5302) (Penicillium decumbens) protein is Cytochrome P450 monooxygenase opdE.